The sequence spans 473 residues: M-phase inducer phosphatase 3 (473 aa).

The segment at 1-23 (MSTELFSSTREEGSSGSGPSFRS) is disordered. Serine 2 is subject to N-acetylserine. Serine 20 and serine 38 each carry phosphoserine. Threonine 48 carries the phosphothreonine modification. Serine 57, serine 61, and serine 64 each carry phosphoserine. A Phosphothreonine modification is found at threonine 67. Phosphoserine; by CDK1 is present on serine 122. Residue serine 129 is modified to Phosphoserine. A Phosphothreonine modification is found at threonine 130. The disordered stretch occupies residues 132-158 (NGLDRGHRKRDAMCSSSANKENDNGNL). Residues 145 to 158 (CSSSANKENDNGNL) are compositionally biased toward polar residues. A Phosphoserine modification is found at serine 168. A phosphoserine; by PLK3 mark is found at serine 191 and serine 198. Serine 214 is modified (phosphoserine; by CDK1). Serine 216 is modified (phosphoserine; by CHEK1, CHEK2, BRSK1, MAPK14 AND MARK3). In terms of domain architecture, Rhodanese spans 321 to 428 (LIEKFYVIDC…FFPEYMELCE (108 aa)). Residues 334–379 (YEYLGGHIQGALNLYSQEELFNFFLKKPIVPLDTQKRIIIVFHCEF) are HIV-1 Vpr binding site. Cysteine 377 is an active-site residue. Position 472 is a phosphoserine (serine 472).

Belongs to the MPI phosphatase family. In terms of assembly, interacts with MAPK14 and 14-3-3 proteins. When phosphorylated on Ser-129 and/or Thr-130, interacts with PLK1. Interacts with MARK3/C-TAK1. (Microbial infection) Interacts with HIV-1 Vpr; this interaction inactivates CDC25C phosphatase activity. Phosphorylated by CHEK1 and MAPK14 at Ser-216. This phosphorylation creates a binding site for 14-3-3 protein and inhibits the phosphatase. Phosphorylated by PLK4. Phosphorylated by PLK1, leading to activate the phosphatase activity. Phosphorylation by PLK3 at Ser-191 promotes nuclear translocation. Ser-198 is a minor phosphorylation site. Was initially reported to be phosphorylated by PLK3 at Ser-216. However, such phosphorylation by PLK3 was not confirmed by other groups. Phosphorylation at Thr-48, Thr-67, Ser-122, Thr-130, Ser-168 and Ser-214 occurs at G2 and G2-M transition and is probably catalyzed by CDK1. Ser-168 phosphorylation levels are lower than those at the other 5 CDK1 sites. Phosphorylation by CDK1 leads to increased activity.

It is found in the nucleus. The enzyme catalyses O-phospho-L-tyrosyl-[protein] + H2O = L-tyrosyl-[protein] + phosphate. Its function is as follows. Functions as a dosage-dependent inducer in mitotic control. Tyrosine protein phosphatase required for progression of the cell cycle. When phosphorylated, highly effective in activating G2 cells into prophase. Directly dephosphorylates CDK1 and activates its kinase activity. In Homo sapiens (Human), this protein is M-phase inducer phosphatase 3 (CDC25C).